The chain runs to 209 residues: Large ribosomal subunit protein uL3 (209 aa).

Gln-150 is subject to N5-methylglutamine.

This sequence belongs to the universal ribosomal protein uL3 family. In terms of assembly, part of the 50S ribosomal subunit. Forms a cluster with proteins L14 and L19. In terms of processing, methylated by PrmB.

In terms of biological role, one of the primary rRNA binding proteins, it binds directly near the 3'-end of the 23S rRNA, where it nucleates assembly of the 50S subunit. In Citrobacter koseri (strain ATCC BAA-895 / CDC 4225-83 / SGSC4696), this protein is Large ribosomal subunit protein uL3.